The primary structure comprises 378 residues: Chaperone protein DnaJ (378 aa).

One can recognise a J domain in the interval 5–69 (EYYDRLGVSK…QKRAAYDQYG (65 aa)). A CR-type zinc finger spans residues 134–216 (GVEKEVSYNR…CHGTGHEKQA (83 aa)). Cys-147, Cys-150, Cys-164, Cys-167, Cys-190, Cys-193, Cys-204, and Cys-207 together coordinate Zn(2+). CXXCXGXG motif repeat units follow at residues 147–154 (CGTCLGSG), 164–171 (CRKCHGSG), 190–197 (CDICHGSG), and 204–211 (CQTCHGTG).

It belongs to the DnaJ family. Homodimer. Zn(2+) serves as cofactor.

Its subcellular location is the cytoplasm. Participates actively in the response to hyperosmotic and heat shock by preventing the aggregation of stress-denatured proteins and by disaggregating proteins, also in an autonomous, DnaK-independent fashion. Unfolded proteins bind initially to DnaJ; upon interaction with the DnaJ-bound protein, DnaK hydrolyzes its bound ATP, resulting in the formation of a stable complex. GrpE releases ADP from DnaK; ATP binding to DnaK triggers the release of the substrate protein, thus completing the reaction cycle. Several rounds of ATP-dependent interactions between DnaJ, DnaK and GrpE are required for fully efficient folding. Also involved, together with DnaK and GrpE, in the DNA replication of plasmids through activation of initiation proteins. The protein is Chaperone protein DnaJ of Streptococcus pyogenes serotype M1.